The chain runs to 199 residues: MSSKGPSYRIENIVATVNLGVELDLESLAERLPMAEYNPDQFPGLILRLTKPRISALIFRTGKMVCTGAKNEEDLKNAVRALVKLLNDHGAEVPFDPEVQIQNIVASGNLHAEVDLEQAVFMLENAMYEPEQFPGLIYRMSSPRVVILIFGSGKIVCTGAKSEKDVATAVQKLYNQLKELGVLYIEEGGGEEEEEEEEM.

2 consecutive repeat copies span residues 10–86 and 101–177.

Belongs to the TBP family.

Its function is as follows. General factor that plays a role in the activation of archaeal genes transcribed by RNA polymerase. Binds specifically to the TATA box promoter element which lies close to the position of transcription initiation. The chain is TATA-box-binding protein from Pyrobaculum calidifontis (strain DSM 21063 / JCM 11548 / VA1).